A 507-amino-acid polypeptide reads, in one-letter code: Extracellular elastase (507 aa).

Positions 1–28 (MKNFSKFALTSIAALTVASPLVNTEVDA) are cleaved as a signal peptide. Residues 29-207 (KDKVSATQNI…VVDKLNMIKE (179 aa)) constitute a propeptide that is removed on maturation. D347 contacts Ca(2+). H351 provides a ligand contact to Zn(2+). E352 is an active-site residue. Residues H355 and E375 each contribute to the Zn(2+) site. Residues D386, E388, D389, L391, E394, Y397, T398, V401, and D404 each coordinate Ca(2+). The Proton donor role is filled by H435.

Belongs to the peptidase M4 family. Ca(2+) serves as cofactor. Zn(2+) is required as a cofactor.

The protein resides in the secreted. Protease that has a low substrate specificity. Glucagon is preferentially cleaved between aromatic (Phe) and hydrophobic (Val) amino acids. Hydrolyzes casein and elastin. The sequence is that of Extracellular elastase (sepA) from Staphylococcus epidermidis.